Here is a 523-residue protein sequence, read N- to C-terminus: Apolipoprotein N-acyltransferase (523 aa).

The next 7 membrane-spanning stretches (helical) occupy residues 26-46, 49-66, 74-94, 109-129, 137-157, 185-205, and 212-232; these read LRFAAPLAALLGVMHTLAFAP, WWWLQILSLAGLAALVRQ, AWVGYAFGLGWFLSGIWWLYI, AAVLLFSAYLALHPALAAWLW, QLSGAASALVFGAAWLVSEWL, LVGVYGVVAIAATLAGLLCAA, and WLAGLAGVAVLAAGWPLHTIA. Residues 246–487 form the CN hydrolase domain; the sequence is LQGNVPQDVK…LGTLQADVQG (242 aa). E284 (proton acceptor) is an active-site residue. K345 is a catalytic residue. The active-site Nucleophile is the C395. Residues 494–514 traverse the membrane as a helical segment; the sequence is FVRTGNAPALGAGVLVLLAAL.

It belongs to the CN hydrolase family. Apolipoprotein N-acyltransferase subfamily.

The protein localises to the cell inner membrane. It catalyses the reaction N-terminal S-1,2-diacyl-sn-glyceryl-L-cysteinyl-[lipoprotein] + a glycerophospholipid = N-acyl-S-1,2-diacyl-sn-glyceryl-L-cysteinyl-[lipoprotein] + a 2-acyl-sn-glycero-3-phospholipid + H(+). Its pathway is protein modification; lipoprotein biosynthesis (N-acyl transfer). In terms of biological role, catalyzes the phospholipid dependent N-acylation of the N-terminal cysteine of apolipoprotein, the last step in lipoprotein maturation. This Ralstonia nicotianae (strain ATCC BAA-1114 / GMI1000) (Ralstonia solanacearum) protein is Apolipoprotein N-acyltransferase.